Consider the following 210-residue polypeptide: Methylthioribulose-1-phosphate dehydratase (210 aa).

Residues histidine 94 and histidine 96 each contribute to the Zn(2+) site.

Belongs to the aldolase class II family. MtnB subfamily. Requires Zn(2+) as cofactor.

The catalysed reaction is 5-(methylsulfanyl)-D-ribulose 1-phosphate = 5-methylsulfanyl-2,3-dioxopentyl phosphate + H2O. It functions in the pathway amino-acid biosynthesis; L-methionine biosynthesis via salvage pathway; L-methionine from S-methyl-5-thio-alpha-D-ribose 1-phosphate: step 2/6. In terms of biological role, catalyzes the dehydration of methylthioribulose-1-phosphate (MTRu-1-P) into 2,3-diketo-5-methylthiopentyl-1-phosphate (DK-MTP-1-P). The polypeptide is Methylthioribulose-1-phosphate dehydratase (Yersinia enterocolitica serotype O:8 / biotype 1B (strain NCTC 13174 / 8081)).